The chain runs to 542 residues: Phenylalanine--tRNA ligase beta subunit (542 aa).

Residues 269–344 (LRRYTVSVSA…MTIGYDKLSP (76 aa)) form the B5 domain. Mg(2+)-binding residues include D322, D328, E331, and E332.

This sequence belongs to the phenylalanyl-tRNA synthetase beta subunit family. Type 2 subfamily. As to quaternary structure, tetramer of two alpha and two beta subunits. It depends on Mg(2+) as a cofactor.

The protein resides in the cytoplasm. It catalyses the reaction tRNA(Phe) + L-phenylalanine + ATP = L-phenylalanyl-tRNA(Phe) + AMP + diphosphate + H(+). The sequence is that of Phenylalanine--tRNA ligase beta subunit from Sulfolobus acidocaldarius (strain ATCC 33909 / DSM 639 / JCM 8929 / NBRC 15157 / NCIMB 11770).